We begin with the raw amino-acid sequence, 891 residues long: uncharacterized protein (891 aa).

A signal peptide spans 1 to 20 (MKILKSLVLLVLFMAMPAKA). 6 helical membrane passes run 525-545 (VTIF…VEVI), 568-588 (TYFF…VVGA), 614-634 (LLFI…IITI), 652-672 (VIAF…IILM), 685-705 (ISTL…FLLI), and 776-796 (FLVL…SYSL).

The protein belongs to the TrbL/VirB6 family.

The protein localises to the cell membrane. This is an uncharacterized protein from Rickettsia conorii (strain ATCC VR-613 / Malish 7).